The sequence spans 428 residues: L-gulono-1,4-lactone dehydrogenase (428 aa).

In terms of domain architecture, FAD-binding PCMH-type spans 12-179; that stretch reads QVCAPSAIVR…SQVTLQTVPL (168 aa).

It belongs to the oxygen-dependent FAD-linked oxidoreductase family. A divalent metal cation serves as cofactor.

The enzyme catalyses L-gulono-1,4-lactone + 2 Fe(III)-[cytochrome c] = L-ascorbate + 2 Fe(II)-[cytochrome c] + 3 H(+). It functions in the pathway cofactor biosynthesis; L-ascorbate biosynthesis. Oxidizes L-gulono-1,4-lactone to L-xylo-hexulonolactone which spontaneously isomerizes to L-ascorbate. The protein is L-gulono-1,4-lactone dehydrogenase of Mycobacterium tuberculosis (strain CDC 1551 / Oshkosh).